The following is a 170-amino-acid chain: Calcineurin subunit B type 2 (170 aa).

The N-myristoyl glycine moiety is linked to residue Gly-2. EF-hand domains are found at residues 18–46 (DEIK…FTSM), 50–85 (QENP…FSVR), 87–122 (DEEQ…MVGD), and 128–163 (QLQQ…LEIH). Positions 63, 65, 67, 69, 74, 100, 102, 104, 106, and 111 each coordinate Ca(2+). Positions 131–136 (QLVDKT) are calcineurin A binding. Residues Asp-141, Asp-143, Asp-145, Lys-147, and Glu-152 each contribute to the Ca(2+) site.

The protein belongs to the calcineurin regulatory subunit family. As to quaternary structure, forms a complex composed of a calmodulin-dependent catalytic subunit (also known as calcineurin A) and a regulatory Ca(2+)-binding subunit (also known as calcineurin B). There are three catalytic subunits, each encoded by a separate gene (PPP3CA, PPP3CB, and PPP3CC) and two regulatory subunits which are also encoded by separate genes (PPP3R1 and PPP3R2). Interacts with SPATA33 (via PQIIIT motif).

The protein resides in the mitochondrion. Its function is as follows. Regulatory subunit of calcineurin, a calcium-dependent, calmodulin stimulated protein phosphatase. Confers calcium sensitivity. This Bos taurus (Bovine) protein is Calcineurin subunit B type 2 (PPP3R2).